A 160-amino-acid polypeptide reads, in one-letter code: Phosphoribosyl-ATP pyrophosphatase (160 aa).

Belongs to the PRA-PH family.

The protein localises to the cytoplasm. It catalyses the reaction 1-(5-phospho-beta-D-ribosyl)-ATP + H2O = 1-(5-phospho-beta-D-ribosyl)-5'-AMP + diphosphate + H(+). The protein operates within amino-acid biosynthesis; L-histidine biosynthesis; L-histidine from 5-phospho-alpha-D-ribose 1-diphosphate: step 2/9. This Granulibacter bethesdensis (strain ATCC BAA-1260 / CGDNIH1) protein is Phosphoribosyl-ATP pyrophosphatase.